A 206-amino-acid polypeptide reads, in one-letter code: Large ribosomal subunit protein uL3 (206 aa).

This sequence belongs to the universal ribosomal protein uL3 family. As to quaternary structure, part of the 50S ribosomal subunit. Forms a cluster with proteins L14 and L19.

Functionally, one of the primary rRNA binding proteins, it binds directly near the 3'-end of the 23S rRNA, where it nucleates assembly of the 50S subunit. This chain is Large ribosomal subunit protein uL3, found in Cytophaga hutchinsonii (strain ATCC 33406 / DSM 1761 / CIP 103989 / NBRC 15051 / NCIMB 9469 / D465).